A 270-amino-acid polypeptide reads, in one-letter code: MRIALGVQYDGAAFCGWQAQPHGKTVQDALERALGEFACVPLHTTVAGRTDTGVHGLGQVVHFDTALDRAEFSWVRGTNAFLPPTVSVQWAKAMPDTFHARFSAFERTYYYALYVHPVRSPMLAGRAGWIHTPLDDDAMRAAAVHLIGEHDFSSFRSSECQSKTPVKHLYQIDVRRSGHFIHFRFRANAFLHHMVRNLMGCLVAVGRGRYPADWLADVLAGRDRNLAAPTFMADGLYLAHVGYPAEFAVPPAQLGSVPWSSVWADLDPQP.

Residue Asp51 is the Nucleophile of the active site. Substrate is bound at residue Tyr109.

It belongs to the tRNA pseudouridine synthase TruA family. Homodimer.

The catalysed reaction is uridine(38/39/40) in tRNA = pseudouridine(38/39/40) in tRNA. In terms of biological role, formation of pseudouridine at positions 38, 39 and 40 in the anticodon stem and loop of transfer RNAs. This Burkholderia vietnamiensis (strain G4 / LMG 22486) (Burkholderia cepacia (strain R1808)) protein is tRNA pseudouridine synthase A.